A 148-amino-acid polypeptide reads, in one-letter code: Suppressor APC domain-containing protein 1 (148 aa).

Residues 120-148 (SRQQKGVTQPKEEMAQRGCTKGPRGPTRV) form a disordered region.

This Homo sapiens (Human) protein is Suppressor APC domain-containing protein 1 (SAPCD1).